Reading from the N-terminus, the 852-residue chain is Protein SEY1 (852 aa).

At 1–738 (MNGHFAAVGN…KRSAIGGITQ (738 aa)) the chain is on the cytoplasmic side. Residues 47–283 (GFNYHLISVF…FVGGVFLPEY (237 aa)) enclose the GB1/RHD3-type G domain. 57–64 (GSQSTGKS) provides a ligand contact to GTP. Residues 475 to 500 (QYRLFEKELDEVSARLRKEEMRRLAI) adopt a coiled-coil conformation. The helical transmembrane segment at 739-759 (VPLYFYIVLLIFGWNEIVMVL) threads the bilayer. Over 760–762 (RNP) the chain is Lumenal. Residues 763-783 (MLFMLLLVMGGGTYVAYTLNL) traverse the membrane as a helical segment. The Cytoplasmic portion of the chain corresponds to 784–852 (LGPMMQMANA…AQEVEEDDDI (69 aa)). The interval 825-852 (RSQDNGIGMDRLDSRGKKAQEVEEDDDI) is disordered. The span at 834–845 (DRLDSRGKKAQE) shows a compositional bias: basic and acidic residues.

This sequence belongs to the TRAFAC class dynamin-like GTPase superfamily. GB1/RHD3 GTPase family. RHD3 subfamily.

The protein localises to the endoplasmic reticulum membrane. In terms of biological role, cooperates with the reticulon proteins and tubule-shaping DP1 family proteins to generate and maintain the structure of the tubular endoplasmic reticulum network. Has GTPase activity, which is required for its function in ER organization. The protein is Protein SEY1 of Chaetomium globosum (strain ATCC 6205 / CBS 148.51 / DSM 1962 / NBRC 6347 / NRRL 1970) (Soil fungus).